The chain runs to 635 residues: Ankyrin repeat and SOCS box protein 2 (635 aa).

Residues 8–16 (RGSQCTIGQ) form a required for FLNA degradation region. Positions 26-45 (SEDELVQMAIEQSLADKTRG) constitute a UIM domain. ANK repeat units lie at residues 104 to 133 (APAD…NLAE), 137 to 167 (EGWL…TIDQ), 171 to 200 (QEET…EPDI), 204 to 233 (SRET…DTNH), 237 to 266 (RGWT…KVES), 270 to 299 (YGIT…DINT), 303 to 332 (DNAS…DANK), 336 to 365 (DGLL…RTRI), 368 to 397 (SGVS…DVNT), 410 to 439 (RRSS…DPNR), 440 to 469 (DVIS…NIDA), and 476 to 504 (TAFP…DGEP). Phosphoserine; by MAPK is present on serine 371. An SOCS box domain is found at 586-635 (IKEKAEPPRPLAHLCRLRVRKAIGKYRIKLLDTLPLPGRLIRYLKYENTQ).

Belongs to the ankyrin SOCS box (ASB) family. In terms of assembly, component of a probable ECS E3 ubiquitin-protein ligase complex which contains CUL5, either RBX1 or RNF7/RBX2, Elongin BC complex (ELOB and ELOC) and ASB2. Interacts with SKP2. Through its interaction with SKP2, likely to bridge the formation of dimeric E3-ubiquitin-protein ligase complexes composed of an ECS complex and an SCF(SKP2) complex. Interacts with JAK2; the interaction targets JAK2 for Notch-mediated proteasomal degradation. Interacts with TCF3/E2A; the interaction is mediated by SKP2 and targets TCF3 for Notch-mediated proteasomal degradation. Interacts with DES. In terms of processing, monoubiquitinated. Not monoubiquitinated. Post-translationally, phosphorylation at Ser-371 is required for association with FLNA and subsequent FLNA degradation. In terms of tissue distribution, expressed in muscle cells. As to expression, expressed in hematopoietic cells.

Its subcellular location is the cytoplasm. The protein localises to the cytoskeleton. It localises to the stress fiber. The protein resides in the myofibril. It is found in the sarcomere. Its subcellular location is the z line. Its pathway is protein modification; protein ubiquitination. Substrate-recognition component of a SCF-like ECS (Elongin-Cullin-SOCS-box protein) E3 ubiquitin-protein ligase complex which mediates the ubiquitination and subsequent proteasomal degradation of target proteins. Mediates Notch-induced ubiquitination and degradation of substrates including TCF3/E2A and JAK2. Required during embryonic heart development for complete heart looping. Required for cardiomyocyte differentiation. Specifically promotes the ubiquitination of SMAD9 and targets it for proteasomal degradation, leading to avoid excessive accumulation of SMAD9. Plays a role in the regulation of NK-cell migration by modulating protein levels of filamin A/FLNA via regulation of its ubiquitination and proteasome degradation. Functionally, involved in myogenic differentiation and targets filamin FLNB for proteasomal degradation but not filamin FLNA. Also targets DES for proteasomal degradation. Acts as a negative regulator of skeletal muscle mass. In terms of biological role, targets filamins FLNA and FLNB for proteasomal degradation. This leads to enhanced adhesion of hematopoietic cells to fibronectin. Required for FLNA degradation in immature cardiomyocytes which is necessary for actin cytoskeleton remodeling, leading to proper organization of myofibrils and function of mature cardiomyocytes. Required for degradation of FLNA and FLNB in immature dendritic cells (DC) which enhances immature DC migration by promoting DC podosome formation and DC-mediated degradation of the extracellular matrix. Does not promote proteasomal degradation of tyrosine-protein kinases JAK1 or JAK2 in hematopoietic cells. The protein is Ankyrin repeat and SOCS box protein 2 (ASB2) of Homo sapiens (Human).